The primary structure comprises 188 residues: Elongation factor P (188 aa).

An N6-(3,6-diaminohexanoyl)-5-hydroxylysine modification is found at lysine 34.

This sequence belongs to the elongation factor P family. Post-translationally, may be beta-lysylated on the epsilon-amino group of Lys-34 by the combined action of EpmA and EpmB, and then hydroxylated on the C5 position of the same residue by EpmC (if this protein is present). Lysylation is critical for the stimulatory effect of EF-P on peptide-bond formation. The lysylation moiety may extend toward the peptidyltransferase center and stabilize the terminal 3-CCA end of the tRNA. Hydroxylation of the C5 position on Lys-34 may allow additional potential stabilizing hydrogen-bond interactions with the P-tRNA.

The protein resides in the cytoplasm. It participates in protein biosynthesis; polypeptide chain elongation. Functionally, involved in peptide bond synthesis. Alleviates ribosome stalling that occurs when 3 or more consecutive Pro residues or the sequence PPG is present in a protein, possibly by augmenting the peptidyl transferase activity of the ribosome. Modification of Lys-34 is required for alleviation. This is Elongation factor P from Yersinia pseudotuberculosis serotype O:1b (strain IP 31758).